The sequence spans 467 residues: Venom serine carboxypeptidase (467 aa).

An N-terminal signal peptide occupies residues 1–18 (MKKLVLLQFLFFISFARG). N-linked (GlcNAc...) asparagine glycosylation is found at Asn130 and Asn169. Ser202 is an active-site residue. Asn304, Asn322, and Asn344 each carry an N-linked (GlcNAc...) asparagine glycan. Active-site residues include Asp387 and His444.

Belongs to the peptidase S10 family. Expressed by the venom duct.

Its subcellular location is the secreted. It carries out the reaction Release of a C-terminal amino acid with broad specificity.. This Apis mellifera (Honeybee) protein is Venom serine carboxypeptidase.